We begin with the raw amino-acid sequence, 160 residues long: Ribosomal RNA large subunit methyltransferase H (160 aa).

Residues Leu76, Gly108, and 127-132 (LGKMTW) each bind S-adenosyl-L-methionine.

This sequence belongs to the RNA methyltransferase RlmH family. Homodimer.

The protein localises to the cytoplasm. The catalysed reaction is pseudouridine(1915) in 23S rRNA + S-adenosyl-L-methionine = N(3)-methylpseudouridine(1915) in 23S rRNA + S-adenosyl-L-homocysteine + H(+). Functionally, specifically methylates the pseudouridine at position 1915 (m3Psi1915) in 23S rRNA. This chain is Ribosomal RNA large subunit methyltransferase H, found in Rhizobium etli (strain CIAT 652).